We begin with the raw amino-acid sequence, 3135 residues long: MKKIITLKNLFLIILVYIFSEKKDLRCNVIKGNNIKDDEDKRFHLFYYSHNLFKTPETKEKKNKKECFYKNGGIYNLSKEIRMRKDTSVKIKQRTCPFHKEGSSFEMGSKNITCFYPIVGKKERKTLDTIIIKKNVTNDHVVSSDMHSNVQEKNMILIRNIDKENKNDIQNVEEKIQRDTYENKDYESDDTLIEWFDDNTNEENFLLTFLKRCLMKIFSSPKRKKTVVQKKHKSNFFINSSLKYIYMYLTPSDSFNLVRRNRNLDEEDMSPRDNFVIDDEEEEEEEEEEEEEEEEEEEEEEEEEYDDYVYEESGDETEEQLQEEHQEEVGAESSEESFNDEDEDSVEARDGDMIRVDEYYEDQDGDTYDSTIKNEDVDEEVGEEVGEEVGEEVGEEVGEEVGEEVGEEVGEEVGEEEGEEVGEGVGEEVGEEEGEEVGEEEGEYVDEKERQGEIYPFGDEEEKDEGGESFTYEKSEVDKTDLFKFIEGGEGDDVYKVDGSKVLLDDDTISRVSKKHTARDGEYGEYGEAVEDGENVIKIIRSVLQSGALPSVGVDELDKIDLSYETTESGDTAVSEDSYDKYASNNTNKEYVCDFTDQLKPTESGPKVKKCEVKVNEPLIKVKIICPLKGSVEKLYDNIEYVPKKSPYVVLTKEETKLKEKLLSKLIYGLLISPTVNEKENNFKEGVIEFTLPPVVHKATVFYFICDNSKTEDDNKKGNRGIVEVYVEPYGNKINGCAFLDEDEEEEKYGNQIEEDEHNEKIKMKTFFTQNIYKKNNIYPCYMKLYSGDIGGILFPKNIKSTTCFEEMIPYNKEIKWNKENKSLGNLVNNSVVYNKEMNAKYFNVQYVHIPTSYKDTLNLFCSIILKEEESNLISTSYLVYVSINEELNFSLFDFYESFVPIKKTIQVAQKNVNNKEHDYTCDFTDKLDKTVPSTANGKKLFICRKHLKEFDTFTLKCNVNKTQYPNIEIFPKTLKDKKEVLKLDLDIQYQMFSKFFKFNTQNAKYLNLYPYYLIFPFNHIGKKELKNNPTYKNHKDVKYFEQSSVLSPLSSADSLGKLLNFLDTQETVCLTEKIRYLNLSINELGSDNNTFSVTFQVPPYIDIKEPFYFMFGCNNNKGEGNIGIVELLISKQEEKIKGCNFHESKLDYFNENISSDTHECTLHAYENDIIGFNCLETTHPNEVEVEVEDAEIYLQPENCFNNVYKGLNSVDITTILKNAQTYNINNKKTPTFLKIPPYNLLEDVEISCQCTIKQVVKKIKVIITKNDTVLLKREVQSESTLDDKIYKCEHENFINPRVNKTFDENVEYTCNIKIENFFNYIQIFCPAKDLGIYKNIQMYYDIVKPTRVPQFKKFNNEELHKLIPNSEMLHKTKEMLILYNEEKVDLLHFYVFLPIYIKDIYEFNIVCDNSKTMWKNQLGGKVIYHITVSKREQKVKGCSFDNEHAHMFSYNKTNVKNCIIDAKPKDLIGFVCPSGTLKLTNCFKDAIVHTNLTNINGILYLKNNLANFTYKHQFNYMEIPALMDNDISFKCICVDLKKKKYNVKSPLGPKVLRALYKKLNIKFDNYVTGTDQNKYLMTYMDLHLSHKRNYLKELFHDLGKKKPADTDANPESIIESLSINESNESGPFPTGDVDAEHLILEGYDTWESLYDEQLEEVIYNDIESLELKDIEQYVLQVNLKAPKLMMSAQIHNNRHVCDFSKNNLIVPESLKKKEELGGNPVNIHCYALLKPLDTLYVKCPTSKDNYEAAKVNISENDNEYELQVISLIEKRFHNFETLESKKPGNGDVVVHNGVVDTGPVLDNSTFEKYFKNIKIKPDKFFEKVINEYDDTEEEKDLESILPGAIVSPMKVLKKKDPFTSYAAFVVPPIVPKDLHFKVECNNTEYKDENQYISGYNGIIHIDISNSNRKINGCDFSTNNSSILTSSVKLVNGETKNCEININNNEVFGIICDNETNLDPEKCFHEIYSKDNKTVKKFREVIPNIDIFSLHNSNKKKVAYAKVPLDYINKLLFSCSCKTSHTNTIGTMKVTLNKDEKEEEDFKTAQGIKHNNVHLCNFFDNPELTFDNNKIVLCKIDAELFSEVIIQLPIFGTKNVEEGVQNEEYKKFSLKPSLVFDDNNNDIKVIGKEKNEVSISLALKGVYGNRIFTFDKNGKKGEGISFFIPPIKQDTDLKFIINETIDNSNIKQRGLIYIFVRKNVSENSFKLCDFTTGSTSLMELNSQVKEKKCTVKIKKGDIFGLKCPKGFAIFPQACFSNVLLEYYKSDYEDSEHINYYIHKDKKYNLKPKDVIELMDENFRELQNIQQYTGISNITDVLHFKNFNLGNLPLNFKNHYSTAYAKVPDTFNSIINFSCNCYNPEKHVYGTMQVESDNRNFDNIKKNENVIKNFLLPNIEKYALLLDDEERQKKIKQQQEEEQQEQILKDQDDRLSRHDDYNKNHTYILYDSNEHICDYEKNESLISTLPNDTKKIQKSICKINAKALDVVTIKCPHTKNFTPKDYFPNSSLITNDKKIVITFDKKNFVTYIDPTKKTFSLKDIYIQSFYGVSLDHLNQIKKIHEEWDDVHLFYPPHNVLHNVVLNNHIVNLSSALEGVLFMKSKVTGDETATKKNTTLPTDGVSSILIPPYVKEDITFHLFCGKSTTKKPNKKNTSLALIHIHISSNRNIIHGCDFLYLENQTNDAISNNNNNSYSIFTHNKNTENNLICDISLIPKTVIGIKCPNKKLNPQTCFDEVYYVKQEDVPSKTITADKYNTFSKDKIGNILKNAISINNPDEKDNTYTYLILPEKFEEELIDTKKVLACTCDNKYIIHMKIEKSTMDKIKIDEKKTIGKDICKYDVTTKVATCEIIDTIDSSVLKEHHTVHYSITLSRWDKLIIKYPTNEKTHFENFFVNPFNLKDKVLYNYNKPINIEHILPGAITTDIYDTRTKIKQYILRIPPYVHKDIHFSLEFNNSLSLTKQNQNIIYGNVAKIFIHINQGYKEIHGCDFTGKYSHLFTYSKKPLPNDDDICNVTIGNNTFSGFACLSHFELKPNNCFSSVYDYNEANKVKKLFDLSTKVELDHIKQNTSGYTLSYIIFNKESTKLKFSCTCSSNYSNYTIRITFDPNYIIPEPQSRAIIKYVDLQDKNFAKYLRKL.

A signal peptide spans 1–20 (MKKIITLKNLFLIILVYIFS). N-linked (GlcNAc...) asparagine glycosylation is found at asparagine 76, asparagine 111, asparagine 135, and asparagine 239. The tract at residues 266-470 (EEDMSPRDNF…EEKDEGGESF (205 aa)) is disordered. 2 stretches are compositionally biased toward acidic residues: residues 276–321 (VIDD…EEQL) and 329–345 (VGAESSEESFNDEDEDS). Over residues 346-358 (VEARDGDMIRVDE) the composition is skewed to basic and acidic residues. Composition is skewed to acidic residues over residues 376 to 444 (DVDE…EGEY) and 458 to 467 (GDEEEKDEGG). N-linked (GlcNAc...) asparagine glycosylation occurs at asparagine 585. 2 6-Cys domains span residues 589-730 (KEYV…VEPY) and 733-887 (KING…INEE). 4 cysteine pairs are disulfide-bonded: cysteine 593–cysteine 611, cysteine 626–cysteine 706, cysteine 737–cysteine 781, and cysteine 804–cysteine 862. Asparagine 821, asparagine 829, asparagine 889, asparagine 961, asparagine 1079, asparagine 1089, and asparagine 1153 each carry an N-linked (GlcNAc...) asparagine glycan. 6-Cys domains follow at residues 918–1133 (HDYT…ISKQ), 1136–1275 (KIKG…LKRE), 1285–1432 (KIYK…VSKR), and 1435–1560 (KVKG…YKKL). 3 disulfides stabilise this stretch: cysteine 1140/cysteine 1161, cysteine 1175/cysteine 1251, and cysteine 1200/cysteine 1249. N-linked (GlcNAc...) asparagine glycosylation is found at asparagine 1267, asparagine 1300, asparagine 1452, asparagine 1492, asparagine 1508, asparagine 1621, and asparagine 1624. 3 disulfides stabilise this stretch: cysteine 1439–cysteine 1459, cysteine 1473–cysteine 1534, and cysteine 1483–cysteine 1532. 4 consecutive 6-Cys domains span residues 1694–1907 (NRHV…ISNS), 1910–2035 (KING…LNKD), 2052–2199 (NVHL…VRKN), and 2204–2374 (SFKL…SDNR). Disulfide bonds link cysteine 1698/cysteine 1726 and cysteine 1740/cysteine 1881. N-linked (GlcNAc...) asparagine glycans are attached at residues asparagine 1753, asparagine 1804, asparagine 1882, asparagine 1920, asparagine 1954, and asparagine 1972. Intrachain disulfides connect cysteine 1914–cysteine 1938, cysteine 1952–cysteine 2017, cysteine 1963–cysteine 2015, and cysteine 2056–cysteine 2074. N-linked (GlcNAc...) asparagine glycosylation is found at asparagine 2178 and asparagine 2199. 3 disulfide bridges follow: cysteine 2208/cysteine 2229, cysteine 2243/cysteine 2356, and cysteine 2254/cysteine 2354. N-linked (GlcNAc...) asparagine glycans are attached at residues asparagine 2312 and asparagine 2351. The interval 2410–2432 (IKQQQEEEQQEQILKDQDDRLSR) is disordered. Basic and acidic residues predominate over residues 2422-2432 (ILKDQDDRLSR). 9 N-linked (GlcNAc...) asparagine glycosylation sites follow: asparagine 2439, asparagine 2457, asparagine 2466, asparagine 2504, asparagine 2586, asparagine 2611, asparagine 2650, asparagine 2677, and asparagine 2688. 6-Cys domains follow at residues 2448–2663 (NEHI…ISSN), 2666–2827 (IIHG…IDEK), 2831–2979 (GKDI…INQG), and 2982–3113 (EIHG…PEPQ). 2 cysteine pairs are disulfide-bonded: cysteine 2452-cysteine 2476 and cysteine 2490-cysteine 2638. 3 disulfide bridges follow: cysteine 2670–cysteine 2706, cysteine 2720–cysteine 2804, and cysteine 2730–cysteine 2802. A glycan (N-linked (GlcNAc...) asparagine) is linked at asparagine 2952. Residues cysteine 2986 and cysteine 3010 are joined by a disulfide bond. N-linked (GlcNAc...) asparagine glycosylation is found at asparagine 3011, asparagine 3016, asparagine 3066, asparagine 3093, and asparagine 3096. Disulfide bonds link cysteine 3024-cysteine 3090 and cysteine 3035-cysteine 3088.

In terms of assembly, heterodimer; heterodimerizes with PF45/48. Post-translationally, may be processed into a 310 kDa form as the parasite emerges from the host erythrocytes.

It is found in the cell surface. The protein localises to the cell membrane. Its function is as follows. Gametocyte surface protein required for male/female gamete fusion. Also required for male gamete exflagellation and interaction with host erythrocytes. The chain is Gametocyte surface protein P230 (PFS230) from Plasmodium falciparum (isolate 3D7).